Reading from the N-terminus, the 142-residue chain is Small ribosomal subunit protein uS12 (142 aa).

The segment at 1 to 43 (MPTFNQLVRKGRKVIEKKSNSPALQKGFNSKKKKPTDVNSPQK) is disordered. At aspartate 102 the chain carries 3-methylthioaspartic acid.

The protein belongs to the universal ribosomal protein uS12 family. As to quaternary structure, part of the 30S ribosomal subunit. Contacts proteins S8 and S17. May interact with IF1 in the 30S initiation complex.

In terms of biological role, with S4 and S5 plays an important role in translational accuracy. Interacts with and stabilizes bases of the 16S rRNA that are involved in tRNA selection in the A site and with the mRNA backbone. Located at the interface of the 30S and 50S subunits, it traverses the body of the 30S subunit contacting proteins on the other side and probably holding the rRNA structure together. The combined cluster of proteins S8, S12 and S17 appears to hold together the shoulder and platform of the 30S subunit. This Ruminiclostridium cellulolyticum (strain ATCC 35319 / DSM 5812 / JCM 6584 / H10) (Clostridium cellulolyticum) protein is Small ribosomal subunit protein uS12.